The primary structure comprises 410 residues: MNPQLNNPNLPIYMDYQATTPLDPRVMEAMLPYFTTKFGNPHSRSHSFGWEAENAVEEARSRVARLIGADTKEIIFTSGATESNNLAIKGIAKFYGNKKNHIITVVSEHKCVLDACRHLEQEGIKITYLPIKPNGIIDLETLKNAITDQTMLVSVMAVNNEIGVVQPLKEIGKICRERGVFFHSDIAQGFGKIPIDVNEFNIDLASISGHKIYGPKGIGALYVRKKPRVRVTPLINGGGQERGMRSGTLPTPLIVGLGMAAEIAYSVMEKDTKHVNYLFDRFLNNIHNRISEVYLNGDKNQRYKGNINLSFAGVEGESIILAIKDLAVSSGSACTSASLEPSYVLRSMGIGEELAHTSIRFGIGRFTTEQEVDYAVDLICSKIDKLRELSPLWEMVQEGIDLKKIKWATH.

Pyridoxal 5'-phosphate contacts are provided by residues 80 to 81, N160, Q188, and 208 to 210; these read AT and SGH. K211 bears the N6-(pyridoxal phosphate)lysine mark. T248 contributes to the pyridoxal 5'-phosphate binding site. The Cysteine persulfide intermediate role is filled by C334. [2Fe-2S] cluster is bound at residue C334.

Belongs to the class-V pyridoxal-phosphate-dependent aminotransferase family. NifS/IscS subfamily. As to quaternary structure, homodimer. Forms a heterotetramer with IscU, interacts with other sulfur acceptors. It depends on pyridoxal 5'-phosphate as a cofactor.

It localises to the cytoplasm. The enzyme catalyses (sulfur carrier)-H + L-cysteine = (sulfur carrier)-SH + L-alanine. The protein operates within cofactor biosynthesis; iron-sulfur cluster biosynthesis. Master enzyme that delivers sulfur to a number of partners involved in Fe-S cluster assembly, tRNA modification or cofactor biosynthesis. Catalyzes the removal of elemental sulfur atoms from cysteine to produce alanine. Functions as a sulfur delivery protein for Fe-S cluster synthesis onto IscU, an Fe-S scaffold assembly protein, as well as other S acceptor proteins. This Rickettsia felis (strain ATCC VR-1525 / URRWXCal2) (Rickettsia azadi) protein is Cysteine desulfurase IscS.